The primary structure comprises 213 residues: Nicotinate-nucleotide adenylyltransferase (213 aa).

It belongs to the NadD family.

It carries out the reaction nicotinate beta-D-ribonucleotide + ATP + H(+) = deamido-NAD(+) + diphosphate. It participates in cofactor biosynthesis; NAD(+) biosynthesis; deamido-NAD(+) from nicotinate D-ribonucleotide: step 1/1. Catalyzes the reversible adenylation of nicotinate mononucleotide (NaMN) to nicotinic acid adenine dinucleotide (NaAD). The chain is Nicotinate-nucleotide adenylyltransferase from Salmonella typhi.